The following is a 167-amino-acid chain: 6,7-dimethyl-8-ribityllumazine synthase (167 aa).

5-amino-6-(D-ribitylamino)uracil-binding positions include F23, 57–59, and 81–83; these read TYE and AVI. (2S)-2-hydroxy-3-oxobutyl phosphate is bound at residue 86–87; sequence GT. The active-site Proton donor is the H89. 5-amino-6-(D-ribitylamino)uracil is bound at residue F119. Residue R133 coordinates (2S)-2-hydroxy-3-oxobutyl phosphate.

The protein belongs to the DMRL synthase family.

The catalysed reaction is (2S)-2-hydroxy-3-oxobutyl phosphate + 5-amino-6-(D-ribitylamino)uracil = 6,7-dimethyl-8-(1-D-ribityl)lumazine + phosphate + 2 H2O + H(+). It participates in cofactor biosynthesis; riboflavin biosynthesis; riboflavin from 2-hydroxy-3-oxobutyl phosphate and 5-amino-6-(D-ribitylamino)uracil: step 1/2. Catalyzes the formation of 6,7-dimethyl-8-ribityllumazine by condensation of 5-amino-6-(D-ribitylamino)uracil with 3,4-dihydroxy-2-butanone 4-phosphate. This is the penultimate step in the biosynthesis of riboflavin. This chain is 6,7-dimethyl-8-ribityllumazine synthase, found in Myxococcus xanthus (strain DK1622).